Here is a 652-residue protein sequence, read N- to C-terminus: DNA ligase (652 aa).

NAD(+) is bound by residues 29–33, 78–79, and Glu-107; these read DSEYD and SL. The active-site N6-AMP-lysine intermediate is Lys-109. NAD(+)-binding residues include Arg-130, Glu-164, Lys-278, and Lys-302. 4 residues coordinate Zn(2+): Cys-395, Cys-398, Cys-413, and Cys-418. Residues 577 to 652 enclose the BRCT domain; the sequence is VADAALSGLT…VRDEAWLESL (76 aa).

Belongs to the NAD-dependent DNA ligase family. LigA subfamily. Mg(2+) serves as cofactor. It depends on Mn(2+) as a cofactor.

The enzyme catalyses NAD(+) + (deoxyribonucleotide)n-3'-hydroxyl + 5'-phospho-(deoxyribonucleotide)m = (deoxyribonucleotide)n+m + AMP + beta-nicotinamide D-nucleotide.. Functionally, DNA ligase that catalyzes the formation of phosphodiester linkages between 5'-phosphoryl and 3'-hydroxyl groups in double-stranded DNA using NAD as a coenzyme and as the energy source for the reaction. It is essential for DNA replication and repair of damaged DNA. This chain is DNA ligase, found in Streptococcus pneumoniae (strain 70585).